We begin with the raw amino-acid sequence, 266 residues long: Imidazole glycerol phosphate synthase subunit HisF (266 aa).

Active-site residues include Asp-11 and Asp-130.

Belongs to the HisA/HisF family. Heterodimer of HisH and HisF.

The protein resides in the cytoplasm. It catalyses the reaction 5-[(5-phospho-1-deoxy-D-ribulos-1-ylimino)methylamino]-1-(5-phospho-beta-D-ribosyl)imidazole-4-carboxamide + L-glutamine = D-erythro-1-(imidazol-4-yl)glycerol 3-phosphate + 5-amino-1-(5-phospho-beta-D-ribosyl)imidazole-4-carboxamide + L-glutamate + H(+). It functions in the pathway amino-acid biosynthesis; L-histidine biosynthesis; L-histidine from 5-phospho-alpha-D-ribose 1-diphosphate: step 5/9. In terms of biological role, IGPS catalyzes the conversion of PRFAR and glutamine to IGP, AICAR and glutamate. The HisF subunit catalyzes the cyclization activity that produces IGP and AICAR from PRFAR using the ammonia provided by the HisH subunit. This Nitrosopumilus maritimus (strain SCM1) protein is Imidazole glycerol phosphate synthase subunit HisF.